Here is an 85-residue protein sequence, read N- to C-terminus: Dynein light chain 1, cytoplasmic (85 aa).

This sequence belongs to the dynein light chain family. Homodimer. Cytoplasmic dynein consists of two catalytic heavy chains (HCs) and a number of non-catalytic subunits which present intermediate chains (ICs), light intermediate chains (LICs) and light chains (LCs). Component of the nuclear pore complex (NPC). NPC constitutes the exclusive means of nucleocytoplasmic transport. NPCs allow the passive diffusion of ions and small molecules and the active, nuclear transport receptor-mediated bidirectional transport of macromolecules such as proteins, RNAs, ribonucleoparticles (RNPs), and ribosomal subunits across the nuclear envelope. Due to its 8-fold rotational symmetry, all subunits are present with 8 copies or multiples thereof.

It is found in the cytoplasm. It localises to the cytoskeleton. The protein localises to the nucleus. Its subcellular location is the nuclear pore complex. Its function is as follows. Acts as one of several non-catalytic accessory components of the cytoplasmic dynein complex that are thought to be involved in linking dynein to cargos and to adapter proteins that regulate dynein function. Cytoplasmic dynein 1 acts as a motor for the intracellular retrograde motility of vesicles and organelles along microtubules. May play a role in changing or maintaining the spatial distribution of cytoskeletal structures. Also a component of the nuclear pore complex. This is Dynein light chain 1, cytoplasmic (dlc2) from Schizosaccharomyces pombe (strain 972 / ATCC 24843) (Fission yeast).